The following is a 400-amino-acid chain: Enolase (400 aa).

A (2R)-2-phosphoglycerate-binding site is contributed by glutamine 153. The active-site Proton donor is glutamate 195. Positions 231, 274, and 301 each coordinate Mg(2+). Residues lysine 326, arginine 355, serine 356, and lysine 377 each coordinate (2R)-2-phosphoglycerate. The Proton acceptor role is filled by lysine 326.

It belongs to the enolase family. Requires Mg(2+) as cofactor.

It localises to the cytoplasm. It is found in the secreted. Its subcellular location is the cell surface. It catalyses the reaction (2R)-2-phosphoglycerate = phosphoenolpyruvate + H2O. Its pathway is carbohydrate degradation; glycolysis; pyruvate from D-glyceraldehyde 3-phosphate: step 4/5. Catalyzes the reversible conversion of 2-phosphoglycerate (2-PG) into phosphoenolpyruvate (PEP). It is essential for the degradation of carbohydrates via glycolysis. In Halorubrum lacusprofundi (strain ATCC 49239 / DSM 5036 / JCM 8891 / ACAM 34), this protein is Enolase.